A 607-amino-acid polypeptide reads, in one-letter code: UvrABC system protein C (607 aa).

One can recognise a GIY-YIG domain in the interval 16 to 94 (GRPGVYRMFD…IKEWRPPYNI (79 aa)). The region spanning 203-238 (NALSDELNASMEKAAMALDFERAAELRDQVALLRRV) is the UVR domain.

It belongs to the UvrC family. In terms of assembly, interacts with UvrB in an incision complex.

It localises to the cytoplasm. The UvrABC repair system catalyzes the recognition and processing of DNA lesions. UvrC both incises the 5' and 3' sides of the lesion. The N-terminal half is responsible for the 3' incision and the C-terminal half is responsible for the 5' incision. The protein is UvrABC system protein C of Pseudomonas syringae pv. syringae (strain B728a).